Consider the following 318-residue polypeptide: Thioredoxin reductase (318 aa).

36–43 (TGMQQGGQ) is an FAD binding site. An intrachain disulfide couples Cys136 to Cys139. Residue 286-295 (DVMDHNYRQA) participates in FAD binding.

This sequence belongs to the class-II pyridine nucleotide-disulfide oxidoreductase family. As to quaternary structure, homodimer. It depends on FAD as a cofactor.

It is found in the cytoplasm. The enzyme catalyses [thioredoxin]-dithiol + NADP(+) = [thioredoxin]-disulfide + NADPH + H(+). The sequence is that of Thioredoxin reductase (trxB) from Vibrio cholerae serotype O1 (strain ATCC 39315 / El Tor Inaba N16961).